The chain runs to 399 residues: S-adenosylmethionine synthase (399 aa).

Residue H17 participates in ATP binding. D19 is a binding site for Mg(2+). E45 contacts K(+). L-methionine-binding residues include E58 and Q101. Residues 101-111 are flexible loop; that stretch reads QSADIAMGVDQ. Residues 177–179, 244–245, D253, 259–260, A276, and K280 contribute to the ATP site; these read DGK, RF, and RK. D253 is an L-methionine binding site. K284 provides a ligand contact to L-methionine.

It belongs to the AdoMet synthase family. In terms of assembly, homotetramer; dimer of dimers. Mg(2+) is required as a cofactor. K(+) serves as cofactor.

The protein resides in the cytoplasm. It catalyses the reaction L-methionine + ATP + H2O = S-adenosyl-L-methionine + phosphate + diphosphate. The protein operates within amino-acid biosynthesis; S-adenosyl-L-methionine biosynthesis; S-adenosyl-L-methionine from L-methionine: step 1/1. Its function is as follows. Catalyzes the formation of S-adenosylmethionine (AdoMet) from methionine and ATP. The overall synthetic reaction is composed of two sequential steps, AdoMet formation and the subsequent tripolyphosphate hydrolysis which occurs prior to release of AdoMet from the enzyme. This Bacillus cereus (strain B4264) protein is S-adenosylmethionine synthase.